The sequence spans 149 residues: D-aminoacyl-tRNA deacylase (149 aa).

The short motif at 137–138 (GP) is the Gly-cisPro motif, important for rejection of L-amino acids element.

This sequence belongs to the DTD family. Homodimer.

It localises to the cytoplasm. The enzyme catalyses glycyl-tRNA(Ala) + H2O = tRNA(Ala) + glycine + H(+). It catalyses the reaction a D-aminoacyl-tRNA + H2O = a tRNA + a D-alpha-amino acid + H(+). An aminoacyl-tRNA editing enzyme that deacylates mischarged D-aminoacyl-tRNAs. Also deacylates mischarged glycyl-tRNA(Ala), protecting cells against glycine mischarging by AlaRS. Acts via tRNA-based rather than protein-based catalysis; rejects L-amino acids rather than detecting D-amino acids in the active site. By recycling D-aminoacyl-tRNA to D-amino acids and free tRNA molecules, this enzyme counteracts the toxicity associated with the formation of D-aminoacyl-tRNA entities in vivo and helps enforce protein L-homochirality. This Anaeromyxobacter dehalogenans (strain 2CP-C) protein is D-aminoacyl-tRNA deacylase.